A 128-amino-acid chain; its full sequence is Aspartate 1-decarboxylase (128 aa).

Ser-25 (schiff-base intermediate with substrate; via pyruvic acid) is an active-site residue. Ser-25 is modified (pyruvic acid (Ser)). Substrate is bound at residue Thr-57. Tyr-58 serves as the catalytic Proton donor. 73 to 75 provides a ligand contact to substrate; the sequence is GAA.

The protein belongs to the PanD family. In terms of assembly, heterooctamer of four alpha and four beta subunits. Pyruvate serves as cofactor. Post-translationally, is synthesized initially as an inactive proenzyme, which is activated by self-cleavage at a specific serine bond to produce a beta-subunit with a hydroxyl group at its C-terminus and an alpha-subunit with a pyruvoyl group at its N-terminus.

It localises to the cytoplasm. The catalysed reaction is L-aspartate + H(+) = beta-alanine + CO2. Its pathway is cofactor biosynthesis; (R)-pantothenate biosynthesis; beta-alanine from L-aspartate: step 1/1. Functionally, catalyzes the pyruvoyl-dependent decarboxylation of aspartate to produce beta-alanine. The polypeptide is Aspartate 1-decarboxylase (Ruminiclostridium cellulolyticum (strain ATCC 35319 / DSM 5812 / JCM 6584 / H10) (Clostridium cellulolyticum)).